Reading from the N-terminus, the 505-residue chain is Phosphomevalonate kinase, peroxisomal (505 aa).

Position 2 is an N-acetylalanine (Ala-2). Residues Asp-57–Leu-65 carry the Peroxisomal targeting signal PTS2 motif. Val-177–Ala-187 contributes to the ATP binding site.

Belongs to the GHMP kinase family. Mevalonate kinase subfamily.

The protein localises to the peroxisome. It carries out the reaction (R)-5-phosphomevalonate + ATP = (R)-5-diphosphomevalonate + ADP. The protein operates within isoprenoid biosynthesis; isopentenyl diphosphate biosynthesis via mevalonate pathway; isopentenyl diphosphate from (R)-mevalonate: step 2/3. This Arabidopsis thaliana (Mouse-ear cress) protein is Phosphomevalonate kinase, peroxisomal.